Consider the following 35-residue polypeptide: Trypsin inhibitor 1 (35 aa).

3 disulfide bridges follow: C2/C19, C9/C23, and C18/C34.

Its function is as follows. Trypsin inhibitor. The polypeptide is Trypsin inhibitor 1 (Spinacia oleracea (Spinach)).